We begin with the raw amino-acid sequence, 85 residues long: Large ribosomal subunit protein bL27 (85 aa).

A disordered region spans residues 1–22 (MAHKKAGGSTNNGRDSESKRLG).

This sequence belongs to the bacterial ribosomal protein bL27 family.

This is Large ribosomal subunit protein bL27 from Vibrio atlanticus (strain LGP32) (Vibrio splendidus (strain Mel32)).